The following is a 365-amino-acid chain: Pituitary-specific positive transcription factor 1 (365 aa).

The 9aaTAD signature appears at 5-12; the sequence is AFSADSFT. Positions 160–191 are disordered; the sequence is PAVLSEEPPLGGTKDLRLRSRPPDDPPDMDSP. The segment covering 173–183 has biased composition (basic and acidic residues); the sequence is KDLRLRSRPPD. In terms of domain architecture, POU-specific spans 188 to 262; that stretch reads MDSPQIRELE…ILAKWLDEAE (75 aa). Positions 278-337 form a DNA-binding region, homeobox; sequence KRKRRTTISLGAKEALERSFREKIKPSSQEIVRMAEGLHLEKEVVRVWFCNRRQREKRVK.

It belongs to the POU transcription factor family. Class-1 subfamily.

The protein localises to the nucleus. Its function is as follows. Transcription factor that activates growth hormone and prolactin genes. Specifically binds to the consensus sequence 5'-TAAAT-3'. The polypeptide is Pituitary-specific positive transcription factor 1 (pou1f1) (Oncorhynchus keta (Chum salmon)).